The sequence spans 290 residues: Protein SSO1 (290 aa).

At 1–265 (MSYNNPYQLE…ARKARKNKIR (265 aa)) the chain is on the cytoplasmic side. The 63-residue stretch at 190–252 (LAEVQARHQE…EQGVGHTDKA (63 aa)) folds into the t-SNARE coiled-coil homology domain. A helical; Anchor for type IV membrane protein membrane pass occupies residues 266–287 (CWLIVFAIIVVVVVVVVVPAVV). Topologically, residues 288–290 (KTR) are extracellular.

The protein belongs to the syntaxin family.

The protein localises to the membrane. Functionally, required for vesicle fusion with the plasma membrane. The chain is Protein SSO1 (SSO1) from Saccharomyces cerevisiae (strain ATCC 204508 / S288c) (Baker's yeast).